A 206-amino-acid polypeptide reads, in one-letter code: Sortase A (206 aa).

Residues 1–6 (MKKWTN) lie on the Cytoplasmic side of the membrane. Residues 7-24 (RLMTIAGVVLILVAAYLF) form a helical membrane-spanning segment. The Extracellular segment spans residues 25–206 (AKPHIDNYLH…RKIFVATEVK (182 aa)). Residues 49-69 (VKEQASKDKKQQAKPQIPKDK) form a disordered region. The Ca(2+) site is built by Glu-105, Glu-108, Asp-112, and Asn-114. His-120 functions as the Proton donor/acceptor in the catalytic mechanism. Glu-171 is a binding site for Ca(2+). The active-site Acyl-thioester intermediate is Cys-184.

It belongs to the bacterial sortase family. Class A subfamily. As to quaternary structure, monomer and homodimer; in equilibrium.

It is found in the cell membrane. The enzyme catalyses The enzyme catalyzes a cell wall sorting reaction in which a surface protein with a sorting signal containing a LPXTG motif is cleaved between the Thr and Gly residue. The resulting threonine carboxyl end of the protein is covalently attached to a pentaglycine cross-bridge of peptidoglycan.. Its activity is regulated as follows. Sortase activity is regulated by monomer-homodimer equilibrium. Mutant cells with monomeric SrtA display more adhesive proteins on the cell surface and are more invasive than wild-type cells, which have majority of SrtA in dimeric form. Dimerization may suppress the enzymatic activity on cell membranes. Stimulated by calcium ions, which promote substrate binding. Calcium ions bind to SrtA and modulate both the structure and dynamics of a large active site loop. Can also be stimulated, to a lesser extent, by Mg(2+) and Mn(2+). Inhibited by sulfhydryl-modifying reagents. Functionally, transpeptidase that anchors surface proteins to the cell wall. Recognizes and modifies its substrate by proteolytic cleavage of a C-terminal sorting signal. Following cleavage, a covalent intermediate is formed via a thioester bond between the sortase and its substrate, which is then transferred and covalently attached to the cell wall. This sortase recognizes a Leu-Pro-x-Thr-Gly (LPXTG) motif, which is cleaved by the sortase between the threonine and glycine residues. Utilizes lipid II as the peptidoglycan substrate for the sorting reaction. Responsible for the display of important virulence factors. Important for interactions with the host and host colonization during infection. This Staphylococcus aureus (strain NCTC 8325 / PS 47) protein is Sortase A.